The primary structure comprises 133 residues: Ribonuclease VapC1 (133 aa).

Mg(2+)-binding residues include Asp7 and Asp98.

Belongs to the PINc/VapC protein family. Mg(2+) is required as a cofactor.

Toxic component of a type II toxin-antitoxin (TA) system. The cognate antitoxin is VapB1. The polypeptide is Ribonuclease VapC1 (Mycobacterium tuberculosis (strain CDC 1551 / Oshkosh)).